The following is a 422-amino-acid chain: L-2-hydroxyglutarate dehydrogenase (422 aa).

Belongs to the L2HGDH family. Requires FAD as cofactor.

It localises to the cell inner membrane. It catalyses the reaction (S)-2-hydroxyglutarate + a quinone = a quinol + 2-oxoglutarate. It functions in the pathway amino-acid degradation. Its function is as follows. Catalyzes the dehydrogenation of L-2-hydroxyglutarate (L2HG) to alpha-ketoglutarate and couples to the respiratory chain by feeding electrons from the reaction into the membrane quinone pool. Functions in a L-lysine degradation pathway that proceeds via cadaverine, glutarate and L-2-hydroxyglutarate. Also displays some oxidase activity in vitro on L-2-hydroxyglutarate with O2 as the electron acceptor, but this activity is most likely not physiological. The polypeptide is L-2-hydroxyglutarate dehydrogenase (Salmonella houtenae).